The following is a 228-amino-acid chain: Heptaprenylglyceryl phosphate synthase (228 aa).

Lysine 12 is a sn-glycerol 1-phosphate binding site. Mg(2+) is bound by residues aspartate 14 and serine 40. Sn-glycerol 1-phosphate contacts are provided by residues 159–164 (YLEYSG), glycine 189, and 209–210 (GN).

Belongs to the GGGP/HepGP synthase family. Group I subfamily. In terms of assembly, homodimer. The cofactor is Mg(2+).

It carries out the reaction sn-glycerol 1-phosphate + all-trans-heptaprenyl diphosphate = 3-heptaprenyl-sn-glycero-1-phosphate + diphosphate. Its pathway is membrane lipid metabolism; glycerophospholipid metabolism. Prenyltransferase that catalyzes in vivo the transfer of the heptaprenyl moiety of heptaprenyl pyrophosphate (HepPP; 35 carbon atoms) to the C3 hydroxyl of sn-glycerol-1-phosphate (G1P), producing heptaprenylglyceryl phosphate (HepGP). This reaction is an ether-bond-formation step in the biosynthesis of archaea-type G1P-based membrane lipids found in Bacillales. This chain is Heptaprenylglyceryl phosphate synthase, found in Bacillus licheniformis (strain ATCC 14580 / DSM 13 / JCM 2505 / CCUG 7422 / NBRC 12200 / NCIMB 9375 / NCTC 10341 / NRRL NRS-1264 / Gibson 46).